The primary structure comprises 331 residues: MTQQDPSTKEPKFIKNGIYRKDSVPVREKKPEWLKVTIPTGQVFTEVRKIVKEHRLHTVCEEAMCPNIGECWSRGTATFMLMGHICTRACRFCAVDTGNPMGKLDLDEPRSVADSVRLMDLKYVVLTSVDRDDLPDGGAYHFAKTVKAIKEVNPQTRVEALTPDFGGNTACVDLVLDSGVDTYAQNLETVRRLTHPVRDIRASYDRTLSVLAHAKQARPDVITKTSLMLGLGETREEIREAMADCRAAGVDVLTFGQYLRPTMHHLPVERYISPAEFDEIREEGMQLGFLEVVSGPLVRSSYKAEQIVMDRPGNLPEHLSHLDGGSELTLI.

Positions 60, 65, 71, 86, 90, 93, and 301 each coordinate [4Fe-4S] cluster. The 219-residue stretch at 72–290 folds into the Radical SAM core domain; sequence WSRGTATFML…REEGMQLGFL (219 aa).

This sequence belongs to the radical SAM superfamily. Lipoyl synthase family. The cofactor is [4Fe-4S] cluster.

It localises to the cytoplasm. The catalysed reaction is [[Fe-S] cluster scaffold protein carrying a second [4Fe-4S](2+) cluster] + N(6)-octanoyl-L-lysyl-[protein] + 2 oxidized [2Fe-2S]-[ferredoxin] + 2 S-adenosyl-L-methionine + 4 H(+) = [[Fe-S] cluster scaffold protein] + N(6)-[(R)-dihydrolipoyl]-L-lysyl-[protein] + 4 Fe(3+) + 2 hydrogen sulfide + 2 5'-deoxyadenosine + 2 L-methionine + 2 reduced [2Fe-2S]-[ferredoxin]. Its pathway is protein modification; protein lipoylation via endogenous pathway; protein N(6)-(lipoyl)lysine from octanoyl-[acyl-carrier-protein]: step 2/2. Catalyzes the radical-mediated insertion of two sulfur atoms into the C-6 and C-8 positions of the octanoyl moiety bound to the lipoyl domains of lipoate-dependent enzymes, thereby converting the octanoylated domains into lipoylated derivatives. This Deinococcus radiodurans (strain ATCC 13939 / DSM 20539 / JCM 16871 / CCUG 27074 / LMG 4051 / NBRC 15346 / NCIMB 9279 / VKM B-1422 / R1) protein is Lipoyl synthase.